The chain runs to 225 residues: Large ribosomal subunit protein bL25 (225 aa).

The tract at residues 197-225 (PQREEQMEDTDTAAADEEGDKEEDADKQE) is disordered. Residues 202 to 225 (QMEDTDTAAADEEGDKEEDADKQE) are compositionally biased toward acidic residues.

It belongs to the bacterial ribosomal protein bL25 family. CTC subfamily. Part of the 50S ribosomal subunit; part of the 5S rRNA/L5/L18/L25 subcomplex. Contacts the 5S rRNA. Binds to the 5S rRNA independently of L5 and L18.

Its function is as follows. This is one of the proteins that binds to the 5S RNA in the ribosome where it forms part of the central protuberance. This is Large ribosomal subunit protein bL25 from Dichelobacter nodosus (strain VCS1703A).